The chain runs to 129 residues: UPF0344 protein MW0851 (129 aa).

4 helical membrane passes run 1–21 (MLHL…ATYL), 36–56 (LHMI…WILI), 67–87 (MLLT…EVSI), and 99–119 (MFWI…ILPL).

It belongs to the UPF0344 family.

The protein resides in the cell membrane. This chain is UPF0344 protein MW0851, found in Staphylococcus aureus (strain MW2).